Here is a 541-residue protein sequence, read N- to C-terminus: ATP synthase subunit beta (541 aa).

A disordered region spans residues 1–65 (MAKAVTSSKG…TPVKKEERAK (65 aa)). Composition is skewed to basic and acidic residues over residues 25–36 (VKKDASKSKDAS) and 52–65 (AAKD…ERAK). 214–221 (GGAGVGKT) provides a ligand contact to ATP.

The protein belongs to the ATPase alpha/beta chains family. As to quaternary structure, F-type ATPases have 2 components, CF(1) - the catalytic core - and CF(0) - the membrane proton channel. CF(1) has five subunits: alpha(3), beta(3), gamma(1), delta(1), epsilon(1). CF(0) has three main subunits: a(1), b(2) and c(9-12). The alpha and beta chains form an alternating ring which encloses part of the gamma chain. CF(1) is attached to CF(0) by a central stalk formed by the gamma and epsilon chains, while a peripheral stalk is formed by the delta and b chains.

It is found in the cell inner membrane. The enzyme catalyses ATP + H2O + 4 H(+)(in) = ADP + phosphate + 5 H(+)(out). Produces ATP from ADP in the presence of a proton gradient across the membrane. The catalytic sites are hosted primarily by the beta subunits. The sequence is that of ATP synthase subunit beta from Bartonella tribocorum (strain CIP 105476 / IBS 506).